Here is a 152-residue protein sequence, read N- to C-terminus: UPF0260 protein BAB1_1496 (152 aa).

It belongs to the UPF0260 family.

This chain is UPF0260 protein BAB1_1496, found in Brucella abortus (strain 2308).